Consider the following 118-residue polypeptide: Small ribosomal subunit protein uS13 (118 aa).

Residues 94–118 form a disordered region; the sequence is GLPVRGQRTKTNARTRKGPRKPIKK.

It belongs to the universal ribosomal protein uS13 family. In terms of assembly, part of the 30S ribosomal subunit. Forms a loose heterodimer with protein S19. Forms two bridges to the 50S subunit in the 70S ribosome.

In terms of biological role, located at the top of the head of the 30S subunit, it contacts several helices of the 16S rRNA. In the 70S ribosome it contacts the 23S rRNA (bridge B1a) and protein L5 of the 50S subunit (bridge B1b), connecting the 2 subunits; these bridges are implicated in subunit movement. Contacts the tRNAs in the A and P-sites. This Edwardsiella ictaluri (strain 93-146) protein is Small ribosomal subunit protein uS13.